We begin with the raw amino-acid sequence, 380 residues long: Cytochrome b (380 aa).

Transmembrane regions (helical) follow at residues 34 to 54 (FGSLLGTCLATQIITGLLLAM), 78 to 99 (WLIRNLHANGASFFFICIYLHI), 114 to 134 (WNTGVVLLLTLMATAFVGYVL), and 179 to 199 (FFALHFLLPFLIAGLTLIHLT). Residues His84 and His98 each coordinate heme b. Heme b contacts are provided by His183 and His197. Position 202 (His202) interacts with a ubiquinone. 4 consecutive transmembrane segments (helical) span residues 227-247 (TKDLLGFIIMLTPLMTLALFS), 289-309 (LGGVLALTASVLVLFLSPFLH), 321-341 (LSQILFWTLVANLLILTWVGS), and 348-368 (FIIIGQLASLTYFTILLILFP).

This sequence belongs to the cytochrome b family. The cytochrome bc1 complex contains 11 subunits: 3 respiratory subunits (MT-CYB, CYC1 and UQCRFS1), 2 core proteins (UQCRC1 and UQCRC2) and 6 low-molecular weight proteins (UQCRH/QCR6, UQCRB/QCR7, UQCRQ/QCR8, UQCR10/QCR9, UQCR11/QCR10 and a cleavage product of UQCRFS1). This cytochrome bc1 complex then forms a dimer. It depends on heme b as a cofactor.

It localises to the mitochondrion inner membrane. Functionally, component of the ubiquinol-cytochrome c reductase complex (complex III or cytochrome b-c1 complex) that is part of the mitochondrial respiratory chain. The b-c1 complex mediates electron transfer from ubiquinol to cytochrome c. Contributes to the generation of a proton gradient across the mitochondrial membrane that is then used for ATP synthesis. The chain is Cytochrome b (MT-CYB) from Aerodramus vulcanorum (Volcano swiftlet).